Here is a 20-residue protein sequence, read N- to C-terminus: DDSMEEVVTVFIRTGSSLKA.

In terms of assembly, dimer of 18 kDa and 60 kDa subunit.

It localises to the microsome membrane. The protein resides in the endoplasmic reticulum membrane. May have spermidine-binding activity. The chain is Putative 18 kDa spermidine-binding protein from Zea mays (Maize).